The primary structure comprises 140 residues: Transcription antitermination protein NusB (140 aa).

The protein belongs to the NusB family.

Functionally, involved in transcription antitermination. Required for transcription of ribosomal RNA (rRNA) genes. Binds specifically to the boxA antiterminator sequence of the ribosomal RNA (rrn) operons. This Streptococcus pneumoniae (strain 70585) protein is Transcription antitermination protein NusB.